A 152-amino-acid polypeptide reads, in one-letter code: 3-hydroxyacyl-[acyl-carrier-protein] dehydratase FabZ (152 aa).

Residue histidine 54 is part of the active site.

It belongs to the thioester dehydratase family. FabZ subfamily.

The protein resides in the cytoplasm. The enzyme catalyses a (3R)-hydroxyacyl-[ACP] = a (2E)-enoyl-[ACP] + H2O. Its function is as follows. Involved in unsaturated fatty acids biosynthesis. Catalyzes the dehydration of short chain beta-hydroxyacyl-ACPs and long chain saturated and unsaturated beta-hydroxyacyl-ACPs. The sequence is that of 3-hydroxyacyl-[acyl-carrier-protein] dehydratase FabZ from Roseobacter denitrificans (strain ATCC 33942 / OCh 114) (Erythrobacter sp. (strain OCh 114)).